The primary structure comprises 330 residues: Olfactory receptor 5P70 (330 aa).

At 1-28 the chain is on the extracellular side; the sequence is MAFLEDGNHTIVTEFILLGLTDDPVLRD. A glycan (N-linked (GlcNAc...) asparagine) is linked at Asn-8. The chain crosses the membrane as a helical span at residues 29-49; the sequence is ILFTIILCIYLVTVSGNLSTI. Over 50-57 the chain is Cytoplasmic; it reads LLIRVSSQ. A helical membrane pass occupies residues 58-78; it reads LHHPMYFFLSHLASVDIGISS. Residues 79 to 102 lie on the Extracellular side of the membrane; sequence SVTPNMLANFLVKPNTISYIGCSI. Residues Cys-100 and Cys-192 are joined by a disulfide bond. A helical transmembrane segment spans residues 103-123; it reads QFTSAVFLATVECFLLAAMAY. Residues 124 to 136 are Cytoplasmic-facing; the sequence is DRFVAICNPLLYS. A helical transmembrane segment spans residues 137–157; the sequence is TKMSREACIQLVVGSYIQGLL. The Extracellular portion of the chain corresponds to 158–199; it reads NASFFTLSFFSLIFCGPNRINHFYCDLAPLVELSCSDVTLAV. A helical membrane pass occupies residues 200–220; that stretch reads VITSISAGFITLTTVFVIAIS. Residues 221–240 are Cytoplasmic-facing; the sequence is YSCIFITIMKMHSTESRYKA. Residues 241-261 form a helical membrane-spanning segment; that stretch reads FSTCTSHLTAVTLFYGTTMFI. The Extracellular segment spans residues 262–274; it reads YVMPKSSYSTDQN. A helical membrane pass occupies residues 275–295; it reads KVLSVFYMVVIPMLNPLIYSL. Over 296–330 the chain is Cytoplasmic; it reads RNNEIKGALKRYLGKKIFSYGNLFCKTHYNDTHQV.

The protein belongs to the G-protein coupled receptor 1 family.

The protein localises to the cell membrane. In terms of biological role, potential odorant receptor. This chain is Olfactory receptor 5P70, found in Mus musculus (Mouse).